Here is a 166-residue protein sequence, read N- to C-terminus: Protein-export protein SecB (166 aa).

The protein belongs to the SecB family. In terms of assembly, homotetramer, a dimer of dimers. One homotetramer interacts with 1 SecA dimer.

It is found in the cytoplasm. Functionally, one of the proteins required for the normal export of preproteins out of the cell cytoplasm. It is a molecular chaperone that binds to a subset of precursor proteins, maintaining them in a translocation-competent state. It also specifically binds to its receptor SecA. The polypeptide is Protein-export protein SecB (Cereibacter sphaeroides (strain ATCC 17025 / ATH 2.4.3) (Rhodobacter sphaeroides)).